Reading from the N-terminus, the 1037-residue chain is Probable aminoglycoside efflux pump (1037 aa).

Residues 1–9 are Cytoplasmic-facing; it reads MANFFIDRP. The helical transmembrane segment at 10–28 threads the bilayer; it reads IFAWVLAILLCLTGTLAIF. At 29 to 339 the chain is on the periplasmic side; sequence SLPVEQYPDL…TSFVKASIED (311 aa). The helical transmembrane segment at 340–359 threads the bilayer; the sequence is VVKTLLEAIALVFLVMYLFL. Topologically, residues 360–365 are cytoplasmic; sequence QNFRAT. The chain crosses the membrane as a helical span at residues 366 to 385; that stretch reads LIPTIAVPVVLMGTFSVLYA. The Periplasmic portion of the chain corresponds to 386 to 391; the sequence is FGYSVN. A helical membrane pass occupies residues 392–413; it reads TLTMFAMVLAIGLLVDDAIVVV. Over 414–441 the chain is Cytoplasmic; sequence ENVERIMSEEGLTPREATRKSMGQIQGA. A helical membrane pass occupies residues 442–460; sequence LVGIAMVLSAVFVPMAFFG. Residues 461-473 are Periplasmic-facing; it reads GTTGAIYRQFSIT. The helical transmembrane segment at 474-496 threads the bilayer; the sequence is IVAAMVLSVLVAMILTPALCATL. The Cytoplasmic portion of the chain corresponds to 497–537; sequence LKPLKKGEHHGQKGFFAWFNQMFNRNAERYEKGVAKILHRS. The helical transmembrane segment at 538–556 threads the bilayer; the sequence is LRWIVIYVLLLGGMVFLFL. Residues 557–870 are Periplasmic-facing; the sequence is RLPTSFLPLE…SYQERLSGAQ (314 aa). The helical transmembrane segment at 871–890 threads the bilayer; sequence APALYAISLLVVFLCLAALY. Over 891 to 896 the chain is Cytoplasmic; it reads ESWSVP. Residues 897–916 form a helical membrane-spanning segment; it reads FSVMLVVPLGVIGALLATWM. The Periplasmic portion of the chain corresponds to 917-922; that stretch reads RGLEND. Residues 923–944 traverse the membrane as a helical segment; that stretch reads VYFQVGLLTVIGLSAKNAILIV. Topologically, residues 945–971 are cytoplasmic; sequence EFANEMNQKGHDLFEATLHACRQRLRP. The helical transmembrane segment at 972-990 threads the bilayer; it reads ILMTSLAFIFGVLPMATST. Residues 991–1003 are Periplasmic-facing; the sequence is GAGSGGQHAVGTG. A helical membrane pass occupies residues 1004 to 1026; sequence VMGGMISATILAIYFVPLFFVLV. At 1027–1037 the chain is on the cytoplasmic side; the sequence is RRRFPLKPRPE.

This sequence belongs to the resistance-nodulation-cell division (RND) (TC 2.A.6) family.

Its subcellular location is the cell inner membrane. In terms of biological role, participates in the efflux of aminoglycosides. Confers resistance to a variety of these substances. The chain is Probable aminoglycoside efflux pump (acrD) from Escherichia coli (strain K12).